The chain runs to 475 residues: ATP synthase subunit beta (475 aa).

ATP is bound at residue 154–161; sequence GGAGVGKT.

The protein belongs to the ATPase alpha/beta chains family. In terms of assembly, F-type ATPases have 2 components, CF(1) - the catalytic core - and CF(0) - the membrane proton channel. CF(1) has five subunits: alpha(3), beta(3), gamma(1), delta(1), epsilon(1). CF(0) has three main subunits: a(1), b(2) and c(9-12). The alpha and beta chains form an alternating ring which encloses part of the gamma chain. CF(1) is attached to CF(0) by a central stalk formed by the gamma and epsilon chains, while a peripheral stalk is formed by the delta and b chains.

The protein resides in the cell inner membrane. The enzyme catalyses ATP + H2O + 4 H(+)(in) = ADP + phosphate + 5 H(+)(out). Functionally, produces ATP from ADP in the presence of a proton gradient across the membrane. The catalytic sites are hosted primarily by the beta subunits. The chain is ATP synthase subunit beta from Hyphomonas neptunium (strain ATCC 15444).